A 563-amino-acid chain; its full sequence is Nigrin b (563 aa).

Positions 1-25 (MRVVAAAMLYFYIVVLAICSVGIQG) are cleaved as a signal peptide. Glutamate 188 is a catalytic residue. N-linked (GlcNAc...) asparagine glycosylation is present at asparagine 221. Cystine bridges form between cysteine 274–cysteine 302, cysteine 319–cysteine 338, and cysteine 360–cysteine 377. 2 consecutive Ricin B-type lectin domains span residues 305–431 (RTSF…WTVT) and 434–559 (VKPI…WVTQ). The 1-alpha repeat unit spans residues 316-356 (DGLCVDVRNGYDTDGTPLQLWPCGTQRNQRWTFDSDDTIRS). One copy of the 1-beta repeat lies at 357–397 (MGKCMTANGLNNGSNIVIFNCSTAAENAIKWEVPIDGSIIN). 2 N-linked (GlcNAc...) asparagine glycosylation sites follow: asparagine 368 and asparagine 376. A 1-gamma repeat occupies 400-432 (SGLVMTAPRAASRTILLLEDNIYAASQGWTVTN). One copy of the 2-alpha repeat lies at 445–482 (KEMCLQSNGENNGVWMEDCEATSLQQQWALYGDRTIRV). A disulfide bridge links cysteine 448 with cysteine 463. Asparagine 483 carries N-linked (GlcNAc...) asparagine glycosylation. One copy of the 2-beta repeat lies at 486-524 (RGLCVTTNGYNSKDLIIILKCQGLPSQRWFFNSDGAIVN). The cysteines at positions 489 and 506 are disulfide-linked. The stretch at 527–554 (SRHVMDVRASNVSLREIIIFPATGNPNQ) is one 2-gamma repeat. Asparagine 537 carries an N-linked (GlcNAc...) asparagine glycan.

In the N-terminal section; belongs to the ribosome-inactivating protein family. Type 2 RIP subfamily. As to quaternary structure, disulfide-linked dimer of A and B chains.

It catalyses the reaction Endohydrolysis of the N-glycosidic bond at one specific adenosine on the 28S rRNA.. Functionally, non-toxic type 2 RIP which strongly inhibits mammalian protein synthesis but does not affect plant nor bacterial protein synthesis. The A chain is responsible for inhibiting protein synthesis through the catalytic inactivation of 60S ribosomal subunits by removing adenine from position 4,324 of 28S rRNA. In terms of biological role, the B chain is a galactose-specific lectin that facilitates the binding of nigrin b to the cell membrane that precedes endocytosis. This Sambucus nigra (European elder) protein is Nigrin b.